The following is a 352-amino-acid chain: Small ribosomal subunit biogenesis GTPase RsgA (352 aa).

Over residues 1-21 (MKKNKLSKNQHRRIQAHHQYR) the composition is skewed to basic residues. The disordered stretch occupies residues 1–38 (MKKNKLSKNQHRRIQAHHQYRLHPTSLTDDKNNQLDDA). Positions 116-278 (FYDGIKPMAA…LIDSPGIREF (163 aa)) constitute a CP-type G domain. GTP contacts are provided by residues 164–167 (NKID) and 218–226 (GQSGVGKSS). Zn(2+) is bound by residues Cys-302, Cys-307, His-309, and Cys-315.

Belongs to the TRAFAC class YlqF/YawG GTPase family. RsgA subfamily. Monomer. Associates with 30S ribosomal subunit, binds 16S rRNA. Zn(2+) serves as cofactor.

It localises to the cytoplasm. One of several proteins that assist in the late maturation steps of the functional core of the 30S ribosomal subunit. Helps release RbfA from mature subunits. May play a role in the assembly of ribosomal proteins into the subunit. Circularly permuted GTPase that catalyzes slow GTP hydrolysis, GTPase activity is stimulated by the 30S ribosomal subunit. This is Small ribosomal subunit biogenesis GTPase RsgA from Hamiltonella defensa subsp. Acyrthosiphon pisum (strain 5AT).